A 478-amino-acid polypeptide reads, in one-letter code: UDP-N-acetylmuramate--L-alanine ligase (478 aa).

122–128 (GTHGKTT) contributes to the ATP binding site.

This sequence belongs to the MurCDEF family.

Its subcellular location is the cytoplasm. The catalysed reaction is UDP-N-acetyl-alpha-D-muramate + L-alanine + ATP = UDP-N-acetyl-alpha-D-muramoyl-L-alanine + ADP + phosphate + H(+). The protein operates within cell wall biogenesis; peptidoglycan biosynthesis. In terms of biological role, cell wall formation. This Stenotrophomonas maltophilia (strain K279a) protein is UDP-N-acetylmuramate--L-alanine ligase.